A 188-amino-acid polypeptide reads, in one-letter code: MASYNTNDFRSGLKIMLDGEPAVITECEFVKPGKGQAFARVRLRKLISNKLLEKTFKSTDSAEGADVMDINLTYLYNDGEFWHFMNNETFEQLAADEKAVGENAKWLIDQAECIVTLWDNRPIAVVPPNFVELEIVDTDPGLKGDTAGTGGKPATLSTGAVVKVPLFVQIGEVIKVDTRSGEYVSRVK.

The residue at position 34 (lysine 34) is an N6-(3,6-diaminohexanoyl)-5-hydroxylysine.

It belongs to the elongation factor P family. May be beta-lysylated on the epsilon-amino group of Lys-34 by the combined action of EpmA and EpmB, and then hydroxylated on the C5 position of the same residue by EpmC (if this protein is present). Lysylation is critical for the stimulatory effect of EF-P on peptide-bond formation. The lysylation moiety may extend toward the peptidyltransferase center and stabilize the terminal 3-CCA end of the tRNA. Hydroxylation of the C5 position on Lys-34 may allow additional potential stabilizing hydrogen-bond interactions with the P-tRNA.

The protein resides in the cytoplasm. The protein operates within protein biosynthesis; polypeptide chain elongation. Involved in peptide bond synthesis. Alleviates ribosome stalling that occurs when 3 or more consecutive Pro residues or the sequence PPG is present in a protein, possibly by augmenting the peptidyl transferase activity of the ribosome. Modification of Lys-34 is required for alleviation. The protein is Elongation factor P of Proteus mirabilis (strain HI4320).